The primary structure comprises 440 residues: Chromosome partition protein MukF (440 aa).

A leucine-zipper region spans residues 208–236 (LSETSGTLRELQDTLEAAGDKLQANLLRI).

It belongs to the MukF family. As to quaternary structure, interacts, and probably forms a ternary complex, with MukE and MukB via its C-terminal region. The complex formation is stimulated by calcium or magnesium. It is required for an interaction between MukE and MukB.

The protein localises to the cytoplasm. It localises to the nucleoid. Functionally, involved in chromosome condensation, segregation and cell cycle progression. May participate in facilitating chromosome segregation by condensation DNA from both sides of a centrally located replisome during cell division. Not required for mini-F plasmid partitioning. Probably acts via its interaction with MukB and MukE. Overexpression results in anucleate cells. It has a calcium binding activity. This is Chromosome partition protein MukF from Edwardsiella ictaluri (strain 93-146).